Consider the following 320-residue polypeptide: Acetyl-coenzyme A carboxylase carboxyl transferase subunit alpha (320 aa).

The CoA carboxyltransferase C-terminal domain maps to 33 to 294 (AFESEIQALR…GDAVEDELKA (262 aa)).

The protein belongs to the AccA family. In terms of assembly, acetyl-CoA carboxylase is a heterohexamer composed of biotin carboxyl carrier protein (AccB), biotin carboxylase (AccC) and two subunits each of ACCase subunit alpha (AccA) and ACCase subunit beta (AccD).

It is found in the cytoplasm. It catalyses the reaction N(6)-carboxybiotinyl-L-lysyl-[protein] + acetyl-CoA = N(6)-biotinyl-L-lysyl-[protein] + malonyl-CoA. The protein operates within lipid metabolism; malonyl-CoA biosynthesis; malonyl-CoA from acetyl-CoA: step 1/1. Functionally, component of the acetyl coenzyme A carboxylase (ACC) complex. First, biotin carboxylase catalyzes the carboxylation of biotin on its carrier protein (BCCP) and then the CO(2) group is transferred by the carboxyltransferase to acetyl-CoA to form malonyl-CoA. This is Acetyl-coenzyme A carboxylase carboxyl transferase subunit alpha from Caulobacter sp. (strain K31).